The chain runs to 360 residues: Diacylglycerol O-acyltransferase 3 (360 aa).

The interval 153-182 (KAKAMKKMTEMDSESSSSSESSDSDCDKGK) is disordered. 4 residues coordinate [2Fe-2S] cluster: cysteine 265, cysteine 270, cysteine 298, and cysteine 302.

The protein belongs to the diacylglycerol acyltransferase family. Requires [2Fe-2S] cluster as cofactor.

The catalysed reaction is an acyl-CoA + a 1,2-diacyl-sn-glycerol = a triacyl-sn-glycerol + CoA. Its pathway is glycerolipid metabolism; triacylglycerol biosynthesis. Functionally, involved in triacylglycerol (TAG) biosynthesis. Catalyzes the acylation of the sn-3 hydroxy group of sn-1,2-diacylglycerol using acyl-CoA. May preferentially use linolenoyl-CoA as substrate and to a lesser extent linoleoyl-CoA. May contribute to the active recycling of linoleate and linolenate into TAG when seed oil breakdown is blocked. The polypeptide is Diacylglycerol O-acyltransferase 3 (Arabidopsis thaliana (Mouse-ear cress)).